The chain runs to 344 residues: Heat-inducible transcription repressor HrcA (344 aa).

It belongs to the HrcA family.

Negative regulator of class I heat shock genes (grpE-dnaK-dnaJ and groELS operons). Prevents heat-shock induction of these operons. This chain is Heat-inducible transcription repressor HrcA, found in Corynebacterium aurimucosum (strain ATCC 700975 / DSM 44827 / CIP 107346 / CN-1) (Corynebacterium nigricans).